Consider the following 309-residue polypeptide: uncharacterized protein (309 aa).

Residues 1 to 60 (MKPLLDVLMILDALEKEGSFAAASAKLYKTPSALSYTVHKLESDLNIQLLDRSGHRAKFT) form the HTH lysR-type domain. Positions 20-39 (FAAASAKLYKTPSALSYTVH) form a DNA-binding region, H-T-H motif.

This sequence belongs to the LysR transcriptional regulatory family.

This is an uncharacterized protein from Escherichia coli (strain K12).